The sequence spans 292 residues: Forkhead box protein R1 (292 aa).

Disordered regions lie at residues 31–50 (PPKLPLEKKPNPDKDGPDYE) and 65–166 (PGKL…ASSQ). Composition is skewed to basic and acidic residues over residues 35-47 (PLEKKPNPDKDGP) and 70-79 (VSGRRKREDL). The segment covering 80–89 (TSTLPSSQPP) has biased composition (polar residues). Residues 129–140 (LTEEEEAEDQED) show a composition bias toward acidic residues. The span at 149-161 (PHKRAPLQSRRLR) shows a compositional bias: basic residues. The fork-head DNA-binding region spans 173-272 (RPPLNYFHLI…EEARALASTR (100 aa)).

In terms of tissue distribution, expressed in testis (at protein level).

It localises to the nucleus. The protein localises to the cytoplasm. Its subcellular location is the perinuclear region. In terms of biological role, transcription factor which acts as both an activator and a repressor. Activates transcription of a number of genes including the heat shock chaperones HSPA1A and HSPA6 and the antioxidant NADPH-dependent reductase DHRS2 which are involved in protection against oxidative stress. Required for normal brain development. In Homo sapiens (Human), this protein is Forkhead box protein R1 (FOXR1).